The chain runs to 88 residues: Gene 86 protein (88 aa).

In Mycobacterium phage D29 (Mycobacteriophage D29), this protein is Gene 86 protein (86).